Here is a 367-residue protein sequence, read N- to C-terminus: Flagellar P-ring protein (367 aa).

The signal sequence occupies residues 1-24 (MLRPIITLLCLTLMLCTAAGPAGA).

The protein belongs to the FlgI family. As to quaternary structure, the basal body constitutes a major portion of the flagellar organelle and consists of four rings (L,P,S, and M) mounted on a central rod.

It localises to the periplasm. It is found in the bacterial flagellum basal body. In terms of biological role, assembles around the rod to form the L-ring and probably protects the motor/basal body from shearing forces during rotation. This Syntrophotalea carbinolica (strain DSM 2380 / NBRC 103641 / GraBd1) (Pelobacter carbinolicus) protein is Flagellar P-ring protein.